A 500-amino-acid polypeptide reads, in one-letter code: MASMLVAQRLACSFQHSYRLLVPGSRHISQAAAKVDVEFDYDGRLMKTEVPGLRCQELMKQLNIIQNAEAVHFFCNYEESRGNYLVDVDGNRMLDLYSQISSVPIGYSHPGLLKLIQQPQNASMFVNRPALGILLPENFVEKLRQSLLSVAPKGMSQLITMACGSCSNENGLKTIFMWYRSKERGQRGFPQEELETCMINQAPWCPDYSILSFMGAFHGRTMGCLATTHSKAIHKIDIPSFDWPIAPFPRLKYPLEEFVKENQQEEARCLEEVEDLIVKYRKKKKTVAGIIVEPIQSEGGDNHASDDFFRKLRDIPRKQCCAFLVDVVQTGGGCTGKFWAHEHWARDDPEDVMTSSKKMMTGGFFHKEEFRPNAPYRIFNTWLGDPSKNLLLAEVINIIKREDLLNNAAHAGKALLTGLLDLQARYPQFISRVRGRGTFCSFDTPDDSIRNKLILIARNKGVVLGGCGDKSIRFRPTLVFRDHHAHLFLNIFSDILADFK.

The transit peptide at 1–28 (MASMLVAQRLACSFQHSYRLLVPGSRHI) directs the protein to the mitochondrion. Residue Cys-163 coordinates [2Fe-2S] cluster. Residue 164–165 (GS) coordinates pyridoxal 5'-phosphate. Residue Cys-166 coordinates [2Fe-2S] cluster. Arg-220 provides a ligand contact to substrate. N6-succinyllysine is present on Lys-231. Lys-252 bears the N6-acetyllysine; alternate mark. Lys-252 is subject to N6-succinyllysine; alternate. N6-acetyllysine occurs at positions 279 and 318. An N6-(pyridoxal phosphate)lysine modification is found at Lys-357. A pyridoxal 5'-phosphate-binding site is contributed by Thr-381. Lys-413 bears the N6-acetyllysine; alternate mark. At Lys-413 the chain carries N6-succinyllysine; alternate. An N6-acetyllysine mark is found at Lys-452 and Lys-470.

It belongs to the class-III pyridoxal-phosphate-dependent aminotransferase family. As to quaternary structure, homodimer; disulfide-linked. It depends on pyridoxal 5'-phosphate as a cofactor. Requires [2Fe-2S] cluster as cofactor.

The protein localises to the mitochondrion matrix. It catalyses the reaction 4-aminobutanoate + 2-oxoglutarate = succinate semialdehyde + L-glutamate. It carries out the reaction (S)-3-amino-2-methylpropanoate + 2-oxoglutarate = 2-methyl-3-oxopropanoate + L-glutamate. Functionally, catalyzes the conversion of gamma-aminobutyrate and L-beta-aminoisobutyrate to succinate semialdehyde and methylmalonate semialdehyde, respectively. Can also convert delta-aminovalerate and beta-alanine. This chain is 4-aminobutyrate aminotransferase, mitochondrial (ABAT), found in Bos taurus (Bovine).